The chain runs to 198 residues: Protein hunchback (198 aa).

Disordered stretches follow at residues 16–117 and 152–198; these read SHHH…PMQS and NDKL…KYMA. Residues 17–31 are compositionally biased toward basic residues; it reads HHHHHHHAHHSHHQH. Composition is skewed to low complexity over residues 35-46 and 68-83; these read SNSNSNASSPHQ and QQQQ…QQQQ. Residues 95–105 show a composition bias toward polar residues; sequence PSPSNNDQNSP. The span at 179–198 shows a compositional bias: basic and acidic residues; it reads EPEKEHDLMSNSSEDMKYMA.

It belongs to the hunchback C2H2-type zinc-finger protein family.

It localises to the nucleus. Gap class segmentation protein that controls development of head structures. This is Protein hunchback (hb) from Drosophila disjuncta (Fruit fly).